A 626-amino-acid chain; its full sequence is Deoxynucleoside triphosphate triphosphohydrolase SAMHD1 (626 aa).

Met-1 is modified (N-acetylmethionine). Residues 1–19 (MQRADSEQPSKRPRCDDSP) are compositionally biased toward basic and acidic residues. The segment at 1–36 (MQRADSEQPSKRPRCDDSPRTPSNTPSAEADWSPGL) is disordered. Residue Ser-18 is modified to Phosphoserine. Phosphothreonine is present on residues Thr-21 and Thr-25. Phosphoserine occurs at positions 33 and 93. The SAM domain maps to 45–110 (WGPEQVCSFL…LSYIQRLVQI (66 aa)). GTP is bound by residues Lys-116 and Val-117. Asn-119 is a binding site for dATP. Position 119 (Asn-119) interacts with dCTP. Asn-119 contributes to the dGTP binding site. Asn-119 is a dTTP binding site. Asp-137, Gln-142, and Arg-145 together coordinate GTP. A dATP-binding site is contributed by Gln-149. Gln-149 contributes to the dCTP binding site. Positions 149, 150, 156, and 164 each coordinate dGTP. Gln-149 lines the dTTP pocket. DATP-binding residues include Val-156 and Arg-164. DCTP is bound by residues Val-156 and Arg-164. Residues Val-156 and Arg-164 each coordinate dTTP. An HD domain is found at 164–316 (RFEHSLGVGY…GIDVDKWDYF (153 aa)). Residues His-167, His-206, and Asp-207 each coordinate Mn(2+). DATP contacts are provided by His-210 and His-215. 2 residues coordinate dCTP: His-210 and His-215. 2 residues coordinate dTTP: His-210 and His-215. Residue His-233 is part of the active site. Asp-311 serves as a coordination point for Mn(2+). DATP contacts are provided by Lys-312, Tyr-315, Asp-319, Arg-333, Arg-352, Lys-354, Asn-358, and Arg-366. Lys-312, Tyr-315, Asp-319, Arg-333, Arg-352, and Lys-354 together coordinate dCTP. DGTP contacts are provided by Lys-312, Tyr-315, Asp-319, Arg-333, Arg-352, Lys-354, Asn-358, and Arg-366. Lys-312, Tyr-315, Asp-319, Arg-333, Arg-352, and Lys-354 together coordinate dTTP. Positions 366 and 372 each coordinate dCTP. DGTP-binding residues include Tyr-374, Gln-375, His-376, and Lys-377. Residues Gln-375, His-376, and Lys-377 each contribute to the dATP site. The dCTP site is built by Gln-375, His-376, and Lys-377. Residues Gln-375, His-376, and Lys-377 each contribute to the dTTP site. 2 residues coordinate GTP: Arg-451 and Lys-455. Residues Lys-467, Lys-469, and Lys-492 each participate in a glycyl lysine isopeptide (Lys-Gly) (interchain with G-Cter in SUMO2) cross-link. Residue Lys-523 participates in GTP binding. Lys-523 contributes to the dATP binding site. DCTP is bound at residue Lys-523. A dGTP-binding site is contributed by Lys-523. Residue Lys-523 participates in dTTP binding. Thr-592 bears the (Microbial infection) Phosphothreonine mark. The residue at position 592 (Thr-592) is a Phosphothreonine; by CDK1. Lys-622 is covalently cross-linked (Glycyl lysine isopeptide (Lys-Gly) (interchain with G-Cter in SUMO2)).

The protein belongs to the SAMHD1 family. As to quaternary structure, homodimer; in absence of GTP and dNTP. Homotetramer; in GTP- and dNTP-bound form. Interacts with MRE11; leading to stimulate the exonuclease activity of MRE11. Interacts with RBBP8/CtIP. Interacts (via its C-terminus) with CD81. In terms of assembly, (Microbial infection) Interacts with HIV-2 viral protein Vpx; promoting interaction with a E3 ubiquitin-protein ligase complex containing DCAF1, leading to subsequent ubiquitination and degradation of SAMHD1. Mn(2+) is required as a cofactor. Post-translationally, phosphorylation at Thr-592 by CDK1 acts as a switch to control deoxynucleoside triphosphate (dNTPase)-dependent and -independent functions. Phosphorylation at Thr-592 takes place in cycling cells: it reduces the stability of the homotetramer, impairing the dNTPase activity and subsequent ability to restrict infection by viruses. It also inhibits ability to suppress LINE-1 retrotransposon activity. In contrast, phosphorylation at Thr-592 promotes DNA end resection at stalled replication forks in response to DNA damage. In terms of processing, (Microbial infection) Phosphorylation at Thr-592 by Epstein-Barr virus kinase BGLF4 and human cytomegalovirus/HCMV UL97 leads to a reduced level of dCTPase and dTTPase activity and the loss of viral restriction. (Microbial infection) Ubiquitinated following interaction with HIV-2 viral protein Vpx; Vpx promotes interaction and with a DCX (DDB1-CUL4-X-box) E3 ubiquitin ligase, leading to proteasomal degradation. In terms of tissue distribution, expressed in heart, skeletal muscle, spleen, liver, small intestine, placenta, lung and peripheral blood leukocytes. No expression is seen in brain and thymus.

The protein localises to the nucleus. The protein resides in the chromosome. It catalyses the reaction a 2'-deoxyribonucleoside 5'-triphosphate + H2O = a 2'-deoxyribonucleoside + triphosphate + H(+). The enzyme catalyses dATP + H2O = 2'-deoxyadenosine + triphosphate + H(+). It carries out the reaction dCTP + H2O = 2'-deoxycytidine + triphosphate + H(+). The catalysed reaction is dGTP + H2O = 2'-deoxyguanosine + triphosphate + H(+). It catalyses the reaction dTTP + H2O = thymidine + triphosphate + H(+). Allosterically activated and regulated via the combined actions of GTP and dNTPs (dATP, dGTP, dTTP and dCTP): Allosteric site 1 binds GTP, while allosteric site 2 binds dNTP. Allosteric activation promotes the formation of highly active homotetramers. Phosphorylation at Thr-592 impairs homotetramerization, thereby inhibiting dNTPase activity, leading to reduced ability to restrict infection by viruses. In terms of biological role, protein that acts both as a host restriction factor involved in defense response to virus and as a regulator of DNA end resection at stalled replication forks. Has deoxynucleoside triphosphate (dNTPase) activity, which is required to restrict infection by viruses, such as HIV-1: dNTPase activity reduces cellular dNTP levels to levels too low for retroviral reverse transcription to occur, blocking early-stage virus replication in dendritic and other myeloid cells. Likewise, suppresses LINE-1 retrotransposon activity. Not able to restrict infection by HIV-2 virus; because restriction activity is counteracted by HIV-2 viral protein Vpx. In addition to virus restriction, dNTPase activity acts as a regulator of DNA precursor pools by regulating dNTP pools. Phosphorylation at Thr-592 acts as a switch to control dNTPase-dependent and -independent functions: it inhibits dNTPase activity and ability to restrict infection by viruses, while it promotes DNA end resection at stalled replication forks. Functions during S phase at stalled DNA replication forks to promote the resection of gapped or reversed forks: acts by stimulating the exonuclease activity of MRE11, activating the ATR-CHK1 pathway and allowing the forks to restart replication. Its ability to promote degradation of nascent DNA at stalled replication forks is required to prevent induction of type I interferons, thereby preventing chronic inflammation. Ability to promote DNA end resection at stalled replication forks is independent of dNTPase activity. Enhances immunoglobulin hypermutation in B-lymphocytes by promoting transversion mutation. This Homo sapiens (Human) protein is Deoxynucleoside triphosphate triphosphohydrolase SAMHD1.